A 262-amino-acid polypeptide reads, in one-letter code: 5'-nucleotidase SurE (262 aa).

Residues Asp-13, Asp-14, Ser-44, and Asn-97 each coordinate a divalent metal cation.

Belongs to the SurE nucleotidase family. The cofactor is a divalent metal cation.

The protein localises to the cytoplasm. It carries out the reaction a ribonucleoside 5'-phosphate + H2O = a ribonucleoside + phosphate. Nucleotidase that shows phosphatase activity on nucleoside 5'-monophosphates. The polypeptide is 5'-nucleotidase SurE (Myxococcus xanthus (strain DK1622)).